Reading from the N-terminus, the 203-residue chain is Urease accessory protein UreG (203 aa).

12-19 (GPVGSGKT) is a GTP binding site.

Belongs to the SIMIBI class G3E GTPase family. UreG subfamily. In terms of assembly, homodimer. UreD, UreF and UreG form a complex that acts as a GTP-hydrolysis-dependent molecular chaperone, activating the urease apoprotein by helping to assemble the nickel containing metallocenter of UreC. The UreE protein probably delivers the nickel.

Its subcellular location is the cytoplasm. Functionally, facilitates the functional incorporation of the urease nickel metallocenter. This process requires GTP hydrolysis, probably effectuated by UreG. The chain is Urease accessory protein UreG from Nitrosococcus oceani (strain ATCC 19707 / BCRC 17464 / JCM 30415 / NCIMB 11848 / C-107).